The chain runs to 237 residues: MTPQDFYRTLEEDGFSLSSKQKEQFDTYFKLLVEWNTKINLTAITEENEVYLKHFYDSIAPILQGFLANEPIKLLDIGAGAGFPSLPMKILFPNLEVTIIDSLNKRISFLTLLAQELGLENVHFFHGRAEDFGQDKAFRGQFDVVTARAVARMQVLSELTIPFLKIGGKLIALKAQAADQELEEAKNALCLLFGKVIKNHSYQLPNGDSRFITIVEKKKETPYKYPRKAGLPNKKPL.

S-adenosyl-L-methionine-binding positions include glycine 78, phenylalanine 83, 129–130, and arginine 148; that span reads AE.

It belongs to the methyltransferase superfamily. RNA methyltransferase RsmG family.

It is found in the cytoplasm. In terms of biological role, specifically methylates the N7 position of a guanine in 16S rRNA. This Streptococcus pyogenes serotype M49 (strain NZ131) protein is Ribosomal RNA small subunit methyltransferase G.